The following is a 95-amino-acid chain: Phosphoribosyl-ATP pyrophosphatase (95 aa).

Belongs to the PRA-PH family.

Its subcellular location is the cytoplasm. The catalysed reaction is 1-(5-phospho-beta-D-ribosyl)-ATP + H2O = 1-(5-phospho-beta-D-ribosyl)-5'-AMP + diphosphate + H(+). It functions in the pathway amino-acid biosynthesis; L-histidine biosynthesis; L-histidine from 5-phospho-alpha-D-ribose 1-diphosphate: step 2/9. This is Phosphoribosyl-ATP pyrophosphatase from Methanosphaera stadtmanae (strain ATCC 43021 / DSM 3091 / JCM 11832 / MCB-3).